Reading from the N-terminus, the 166-residue chain is MKYTSYFLALQLCLLLGFSGSYGQGPFFKEIENLKEYFNASNPDVATGGPLFLEILKNWKEESDKKIIQSQIVSFYFKLFENFKDDQVIQRSMDIIKQDMFQKFLNGSSEKLEDFKKLIQIPVDDLQIQRKAINELIKVMNDLLPKSNLRKRKRSQNLFRGRRAST.

The N-terminal stretch at 1–23 (MKYTSYFLALQLCLLLGFSGSYG) is a signal peptide. At glutamine 24 the chain carries Pyrrolidone carboxylic acid. 2 N-linked (GlcNAc...) asparagine glycosylation sites follow: asparagine 39 and asparagine 106.

This sequence belongs to the type II (or gamma) interferon family. In terms of assembly, homodimer. Interacts with IFNGR1 (via extracellular domain); this interaction promotes IFNGR1 dimerization. As to expression, released primarily from activated T lymphocytes.

It localises to the secreted. Its function is as follows. Type II interferon produced by immune cells such as T-cells and NK cells that plays crucial roles in antimicrobial, antiviral, and antitumor responses by activating effector immune cells and enhancing antigen presentation. Primarily signals through the JAK-STAT pathway after interaction with its receptor IFNGR1 to affect gene regulation. Upon IFNG binding, IFNGR1 intracellular domain opens out to allow association of downstream signaling components JAK2, JAK1 and STAT1, leading to STAT1 activation, nuclear translocation and transcription of IFNG-regulated genes. Many of the induced genes are transcription factors such as IRF1 that are able to further drive regulation of a next wave of transcription. Plays a role in class I antigen presentation pathway by inducing a replacement of catalytic proteasome subunits with immunoproteasome subunits. In turn, increases the quantity, quality, and repertoire of peptides for class I MHC loading. Increases the efficiency of peptide generation also by inducing the expression of activator PA28 that associates with the proteasome and alters its proteolytic cleavage preference. Up-regulates as well MHC II complexes on the cell surface by promoting expression of several key molecules such as cathepsins B/CTSB, H/CTSH, and L/CTSL. Participates in the regulation of hematopoietic stem cells during development and under homeostatic conditions by affecting their development, quiescence, and differentiation. The polypeptide is Interferon gamma (IFNG) (Moschus berezovskii (Chinese forest musk deer)).